The following is a 478-amino-acid chain: ATP synthase subunit beta (478 aa).

Position 152 to 159 (glycine 152 to threonine 159) interacts with ATP.

Belongs to the ATPase alpha/beta chains family. In terms of assembly, F-type ATPases have 2 components, CF(1) - the catalytic core - and CF(0) - the membrane proton channel. CF(1) has five subunits: alpha(3), beta(3), gamma(1), delta(1), epsilon(1). CF(0) has three main subunits: a(1), b(2) and c(9-12). The alpha and beta chains form an alternating ring which encloses part of the gamma chain. CF(1) is attached to CF(0) by a central stalk formed by the gamma and epsilon chains, while a peripheral stalk is formed by the delta and b chains.

The protein localises to the cell membrane. It catalyses the reaction ATP + H2O + 4 H(+)(in) = ADP + phosphate + 5 H(+)(out). Functionally, produces ATP from ADP in the presence of a proton gradient across the membrane. The catalytic sites are hosted primarily by the beta subunits. This chain is ATP synthase subunit beta, found in Wolbachia pipientis subsp. Culex pipiens (strain wPip).